We begin with the raw amino-acid sequence, 170 residues long: MEPEVEVYALGQHICMSAHKARRVIDQIRGRPYDEILMILELMPYRACYPIFKLVYSAAANATNNKGFNKTALIISQAEVNEGTVVKKLKPRARGRSYPIKRPTCHITIVLQDISKDKNFYIWLRKKGGWIYKEKYIDIREKYEYFLHEALNRGRMEWANSGYEVVWDKK.

Belongs to the universal ribosomal protein uL22 family. Part of the 50S ribosomal subunit.

Its subcellular location is the plastid. The protein localises to the chloroplast. In terms of biological role, this protein binds specifically to 23S rRNA. The globular domain of the protein is located near the polypeptide exit tunnel on the outside of the subunit, while an extended beta-hairpin is found that lines the wall of the exit tunnel in the center of the 70S ribosome. This Nandina domestica (Heavenly bamboo) protein is Large ribosomal subunit protein uL22c (rpl22).